Consider the following 402-residue polypeptide: Flavohemoprotein (402 aa).

The 136-residue stretch at 1–136 (MLSEKTIEIV…IADAFISIEA (136 aa)) folds into the Globin domain. Histidine 85 contributes to the heme b binding site. Active-site charge relay system residues include tyrosine 95 and glutamate 135. The segment at 147–402 (GGWKDFRNFV…EFFGPAASLQ (256 aa)) is reductase. One can recognise an FAD-binding FR-type domain in the interval 150–260 (KDFRNFVVVK…SAPAGDFVLN (111 aa)). Residues tyrosine 188 and 204–207 (RQYS) contribute to the FAD site. Residue 273 to 278 (GVGITP) participates in NADP(+) binding. 394 to 397 (FFGP) contacts FAD.

Belongs to the globin family. Two-domain flavohemoproteins subfamily. This sequence in the C-terminal section; belongs to the flavoprotein pyridine nucleotide cytochrome reductase family. It depends on heme b as a cofactor. Requires FAD as cofactor.

It catalyses the reaction 2 nitric oxide + NADPH + 2 O2 = 2 nitrate + NADP(+) + H(+). The enzyme catalyses 2 nitric oxide + NADH + 2 O2 = 2 nitrate + NAD(+) + H(+). Its function is as follows. Is involved in NO detoxification in an aerobic process, termed nitric oxide dioxygenase (NOD) reaction that utilizes O(2) and NAD(P)H to convert NO to nitrate, which protects the bacterium from various noxious nitrogen compounds. Therefore, plays a central role in the inducible response to nitrosative stress. This chain is Flavohemoprotein, found in Bacillus cereus (strain ATCC 10987 / NRS 248).